Consider the following 345-residue polypeptide: Nuclear distribution protein nudE-like 1-A (345 aa).

Residues 19–190 (WRELSKRLKQ…LAVRERQTDG (172 aa)) are a coiled coil. Residues 182–192 (AVRERQTDGTR) show a composition bias toward basic and acidic residues. 2 disordered regions span residues 182–206 (AVRE…CDKT) and 326–345 (PPGV…PLSV). A compositionally biased stretch (pro residues) spans 334-345 (PPSPPGMLPLSV).

It belongs to the nudE family. In terms of processing, phosphorylated in mitosis.

It localises to the cytoplasm. The protein resides in the cytoskeleton. Its subcellular location is the microtubule organizing center. The protein localises to the centrosome. It is found in the spindle. In terms of biological role, required for organization of the cellular microtubule array and microtubule anchoring at the centrosome. Positively regulates the activity of the minus-end directed microtubule motor protein dynein. May enhance dynein-mediated microtubule sliding by targeting dynein to the microtubule plus end. Positively regulates lysosome peripheral distribution and ruffled border formation in osteoclasts. The chain is Nuclear distribution protein nudE-like 1-A (ndel1-a) from Xenopus laevis (African clawed frog).